A 529-amino-acid chain; its full sequence is MMKKVQRFGGAMMAPVLLFAFTGIVVGLSSVFTNTEVMGKIAEEGTVWYNFWYVISEGGWTVFRQMPILFAIGLPISLATKTNARACMETFALYTTFNYFVAAILKVFYGIDAAKQVADKVTGYSAIGGVPTLDTNLFGGILIAALVVYLHNKYFDKKLPDFLGVFQGSVFVYIVGFVVMIPCAFLTVLIWPKFQMGISALQGFMKASGIFGVWIYTFLERILIPTGLHHFVYTPFVFGPAAVPDGIQVYWVQHIKEFAQSTQSLKSLFPQGGFALHGNSKIFGAPGIALAMYATAKSDKKKAVAALLIPIIFTAVISGITEPLEFTFLFIAPVLFAVHACLAATMAATMYAFGVVGNMGGGLLDFFFLNWIPMFKNHSGTVIAQIVIGLIFTAIYFVVFRFLILKMDLKTPGREDEDEEMKLYSKADYRAKHGEGDAKGGVSSAEDEYAQKGAIILEALGGKENIEELNNCATRLRVSVKDASKLLPDAAFKAAGAHGVVRKGTAIQVIIGLSVPQVRERIEEMMKKG.

The region spanning 1–416 (MMKKVQRFGG…MDLKTPGRED (416 aa)) is the PTS EIIC type-1 domain. Transmembrane regions (helical) follow at residues 8 to 28 (FGGA…VVGL), 59 to 79 (GWTV…ISLA), 91 to 111 (FALY…FYGI), 130 to 150 (VPTL…VVYL), 170 to 190 (VFVY…TVLI), 198 to 218 (ISAL…IYTF), 222 to 242 (ILIP…GPAA), 272 to 292 (GGFA…ALAM), 304 to 324 (VAAL…TEPL), 328 to 348 (FLFI…TMAA), 352 to 372 (AFGV…LNWI), and 380 to 400 (GTVI…FVVF). Residues 450-529 (AQKGAIILEA…ERIEEMMKKG (80 aa)) enclose the PTS EIIB type-1 domain. Cysteine 472 acts as the Phosphocysteine intermediate; for EIIB activity in catalysis.

It is found in the cell membrane. Its function is as follows. The phosphoenolpyruvate-dependent sugar phosphotransferase system (sugar PTS), a major carbohydrate active -transport system, catalyzes the phosphorylation of incoming sugar substrates concomitantly with their translocation across the cell membrane. This system is probably involved in transport of the alpha-glucosides trehalulose, turanose, maltulose and palatinose. This chain is PTS system alpha-glucoside-specific EIICB component, found in Leptotrichia buccalis (strain ATCC 14201 / DSM 1135 / JCM 12969 / NCTC 10249 / C-1013-b).